The sequence spans 375 residues: Eukaryotic translation initiation factor 3 subunit F (375 aa).

The MPN domain maps to 30-166; that stretch reads VVIQPQALFS…TRAYISAPVG (137 aa). Residues 307–375 are disordered; the sequence is LGGESGSGES…EAQNGKEEKK (69 aa). Positions 323–332 are enriched in gly residues; that stretch reads QRGGKGGRGG. Composition is skewed to basic and acidic residues over residues 336–345 and 358–375; these read TQERSGEEAR and RSYE…EEKK.

This sequence belongs to the eIF-3 subunit F family. In terms of assembly, component of the eukaryotic translation initiation factor 3 (eIF-3) complex.

The protein localises to the cytoplasm. Functionally, component of the eukaryotic translation initiation factor 3 (eIF-3) complex, which is involved in protein synthesis of a specialized repertoire of mRNAs and, together with other initiation factors, stimulates binding of mRNA and methionyl-tRNAi to the 40S ribosome. The eIF-3 complex specifically targets and initiates translation of a subset of mRNAs involved in cell proliferation. This Aspergillus niger (strain ATCC MYA-4892 / CBS 513.88 / FGSC A1513) protein is Eukaryotic translation initiation factor 3 subunit F.